A 758-amino-acid chain; its full sequence is Catalase-peroxidase (758 aa).

Over residues 1–10 the composition is skewed to polar residues; the sequence is MSDTQDNAPA. The disordered stretch occupies residues 1 to 59; it reads MSDTQDNAPASAQGVDQKAAAGCPVAHDSVTAHGSESESPAIDSPTPHSGGRPRTNRDW. The segment at residues 128–250 is a cross-link (tryptophyl-tyrosyl-methioninium (Trp-Tyr) (with M-276)); the sequence is WHAAGTYRID…VGATEMGLIY (123 aa). The active-site Proton acceptor is histidine 129. Positions 250–276 form a cross-link, tryptophyl-tyrosyl-methioninium (Tyr-Met) (with W-128); the sequence is YVNPEGPRGNADPAAAAHFIRETFRRM. Histidine 291 contributes to the heme b binding site.

It belongs to the peroxidase family. Peroxidase/catalase subfamily. As to quaternary structure, homodimer or homotetramer. It depends on heme b as a cofactor. In terms of processing, formation of the three residue Trp-Tyr-Met cross-link is important for the catalase, but not the peroxidase activity of the enzyme.

It carries out the reaction H2O2 + AH2 = A + 2 H2O. The catalysed reaction is 2 H2O2 = O2 + 2 H2O. In terms of biological role, bifunctional enzyme with both catalase and broad-spectrum peroxidase activity. This chain is Catalase-peroxidase, found in Salinispora arenicola (strain CNS-205).